The primary structure comprises 153 residues: Ubiquitin/ISG15-conjugating enzyme E2 L6 (153 aa).

A UBC core domain is found at 2-149 (MASMRVVKEL…AEEFTLRFGV (148 aa)). Residue Cys86 is the Glycyl thioester intermediate of the active site.

The protein belongs to the ubiquitin-conjugating enzyme family. As to quaternary structure, interacts with RNF19A, RNF19B and RNF144B. Interacts with FLT3 (tyrosine phosphorylated). Post-translationally, ISGylated. Present in natural killer cells (at protein level).

It catalyses the reaction S-ubiquitinyl-[E1 ubiquitin-activating enzyme]-L-cysteine + [E2 ubiquitin-conjugating enzyme]-L-cysteine = [E1 ubiquitin-activating enzyme]-L-cysteine + S-ubiquitinyl-[E2 ubiquitin-conjugating enzyme]-L-cysteine.. It functions in the pathway protein modification; protein ubiquitination. Its function is as follows. Catalyzes the covalent attachment of ubiquitin or ISG15 to other proteins. Functions in the E6/E6-AP-induced ubiquitination of p53/TP53. Promotes ubiquitination and subsequent proteasomal degradation of FLT3. This chain is Ubiquitin/ISG15-conjugating enzyme E2 L6 (UBE2L6), found in Homo sapiens (Human).